Consider the following 285-residue polypeptide: Polyamine aminopropyltransferase (285 aa).

Residues 5–241 (DNWYIEHFQP…GWWSVTMASK (237 aa)) form the PABS domain. Residue Q35 coordinates S-methyl-5'-thioadenosine. Spermidine-binding residues include H66 and D90. S-methyl-5'-thioadenosine-binding positions include D110 and 141–142 (DG). D160 serves as the catalytic Proton acceptor. 160 to 163 (DSTD) is a spermidine binding site. P167 contributes to the S-methyl-5'-thioadenosine binding site.

This sequence belongs to the spermidine/spermine synthase family. In terms of assembly, homodimer or homotetramer.

Its subcellular location is the cytoplasm. The enzyme catalyses S-adenosyl 3-(methylsulfanyl)propylamine + putrescine = S-methyl-5'-thioadenosine + spermidine + H(+). Its pathway is amine and polyamine biosynthesis; spermidine biosynthesis; spermidine from putrescine: step 1/1. In terms of biological role, catalyzes the irreversible transfer of a propylamine group from the amino donor S-adenosylmethioninamine (decarboxy-AdoMet) to putrescine (1,4-diaminobutane) to yield spermidine. The sequence is that of Polyamine aminopropyltransferase from Xanthomonas campestris pv. campestris (strain 8004).